The primary structure comprises 658 residues: MKKVRFIFLALLFFLASPEGAMASDGTWQGKQYLKEDGSQAANEWVFDTHYQSWFYIKADANYAENEWLKQGDDYFYLKSGGYMAKSEWVEDKGAFYYLDQDGKMKRNAWVGTSYVGATGAKVIEDWVYDSQYDAWFYIKADGQHAEKEWLQIKGKDYYFKSGGYLLTSQWINQAYVNASGAKVQQGWLFDKQYQSWFYIKENGNYADKEWIFENGHYYYLKSGGYMAANEWIWDKESWFYLKFDGKMAEKEWVYDSHSQAWYYFKSGGYMTANEWIWDKESWFYLKSDGKIAEKEWVYDSHSQAWYYFKSGGYMTANEWIWDKESWFYLKSDGKIAEKEWVYDSHSQAWYYFKSGGYMAKNETVDGYQLGSDGKWLGGKTTNENAAYYQVVPVTANVYDSDGEKLSYISQGSVVWLDKDRKSDDKRLAITISGLSGYMKTEDLQALDASKDFIPYYESDGHRFYHYVAQNASIPVASHLSDMEVGKKYYSADGLHFDGFKLENPFLFKDLTEATNYSAEELDKVFSLLNINNSLLENKGATFKEAEEHYHINALYLLAHSALESNWGRSKIAKDKNNFFGITAYDTTPYLSAKTFDDVDKGILGATKWIKENYIDRGRTFLGNKASGMNVEYASDPYWGEKIASVMMKINEKLGGKD.

A signal peptide spans M1–A23. 13 Cell wall-binding repeats span residues A42–Y63, E65–M84, K86–M105, I124–H145, E147–L166, Q185–Y206, D208–M227, A229–M248, E250–M271, A273–I292, E294–M315, A317–I336, and E338–M359.

It belongs to the glycosyl hydrolase 73 family.

The protein resides in the secreted. It carries out the reaction an N(4)-(oligosaccharide-(1-&gt;3)-[oligosaccharide-(1-&gt;6)]-beta-D-Man-(1-&gt;4)-beta-D-GlcNAc-(1-&gt;4)-alpha-D-GlcNAc)-L-asparaginyl-[protein] + H2O = an oligosaccharide-(1-&gt;3)-[oligosaccharide-(1-&gt;6)]-beta-D-Man-(1-&gt;4)-D-GlcNAc + N(4)-(N-acetyl-beta-D-glucosaminyl)-L-asparaginyl-[protein]. Plays an important role in cell wall degradation and cell separation. The protein is Putative endo-beta-N-acetylglucosaminidase (lytB) of Streptococcus pneumoniae serotype 4 (strain ATCC BAA-334 / TIGR4).